A 438-amino-acid polypeptide reads, in one-letter code: Aspartate--tRNA(Asp/Asn) ligase (438 aa).

An L-aspartate-binding site is contributed by Glu176. The interval 198-201 (QLYK) is aspartate. Arg220 lines the L-aspartate pocket. ATP-binding positions include 220 to 222 (RAE), 228 to 230 (RHL), and Glu361. Residues Glu361 and Ser364 each coordinate Mg(2+). The L-aspartate site is built by Ser364 and Arg368. Residue 409 to 412 (GADR) coordinates ATP.

Belongs to the class-II aminoacyl-tRNA synthetase family. Type 2 subfamily. As to quaternary structure, homodimer. It depends on Mg(2+) as a cofactor.

The protein resides in the cytoplasm. The enzyme catalyses tRNA(Asx) + L-aspartate + ATP = L-aspartyl-tRNA(Asx) + AMP + diphosphate. Functionally, aspartyl-tRNA synthetase with relaxed tRNA specificity since it is able to aspartylate not only its cognate tRNA(Asp) but also tRNA(Asn). Reaction proceeds in two steps: L-aspartate is first activated by ATP to form Asp-AMP and then transferred to the acceptor end of tRNA(Asp/Asn). This chain is Aspartate--tRNA(Asp/Asn) ligase, found in Methanococcus maripaludis (strain C5 / ATCC BAA-1333).